The following is a 671-amino-acid chain: Putative protein kinase C delta type homolog (671 aa).

Positions 1–136 are disordered; that stretch reads MMFTRAQVRK…ITNRRGAIKH (136 aa). Residues 14–27 show a composition bias toward low complexity; sequence SNSSSQRPRSSGGS. Over residues 57-101 the composition is skewed to basic and acidic residues; that stretch reads ARRDQYRDRDHYGKHSFELPRQHSKEEAYHRDRESSAGGVDRGER. Positions 102 to 116 are enriched in gly residues; it reads SGIGGNGGGVTGGGV. 2 Phorbol-ester/DAG-type zinc fingers span residues 144-194 and 216-266; these read GHRF…LGKC and PHRF…ANLC. The Protein kinase domain occupies 343 to 601; that stretch reads FHFLAVLGKG…AGDIADHIFF (259 aa). Residues 349–357 and K372 contribute to the ATP site; that span reads LGKGSFGKV. The active-site Proton acceptor is D467. The AGC-kinase C-terminal domain occupies 602–671; the sequence is RPIDWGLLEK…TYTNPHITLD (70 aa).

This sequence belongs to the protein kinase superfamily. AGC Ser/Thr protein kinase family. PKC subfamily.

It catalyses the reaction L-seryl-[protein] + ATP = O-phospho-L-seryl-[protein] + ADP + H(+). The enzyme catalyses L-threonyl-[protein] + ATP = O-phospho-L-threonyl-[protein] + ADP + H(+). The polypeptide is Putative protein kinase C delta type homolog (Drosophila melanogaster (Fruit fly)).